A 123-amino-acid chain; its full sequence is Small ribosomal subunit protein uS12 (123 aa).

Positions 1-22 (MATINQLVRQPRKRSVEKSDVP) are disordered. Asp-89 is subject to 3-methylthioaspartic acid. The interval 100–123 (GSLDTSGVKGRNQGRSKYGTKRPK) is disordered. Over residues 111 to 123 (NQGRSKYGTKRPK) the composition is skewed to basic residues.

This sequence belongs to the universal ribosomal protein uS12 family. In terms of assembly, part of the 30S ribosomal subunit. Contacts proteins S8 and S17. May interact with IF1 in the 30S initiation complex.

In terms of biological role, with S4 and S5 plays an important role in translational accuracy. Functionally, interacts with and stabilizes bases of the 16S rRNA that are involved in tRNA selection in the A site and with the mRNA backbone. Located at the interface of the 30S and 50S subunits, it traverses the body of the 30S subunit contacting proteins on the other side and probably holding the rRNA structure together. The combined cluster of proteins S8, S12 and S17 appears to hold together the shoulder and platform of the 30S subunit. The polypeptide is Small ribosomal subunit protein uS12 (Pseudomonas entomophila (strain L48)).